The sequence spans 161 residues: Large ribosomal subunit protein uL15 (161 aa).

A disordered region spans residues 1–44 (MKLSEIADNAGSRKKRMRVGRGIGSGKGKTAGRGGKGQTARSGV). Over residues 21-37 (RGIGSGKGKTAGRGGKG) the composition is skewed to gly residues.

It belongs to the universal ribosomal protein uL15 family. Part of the 50S ribosomal subunit.

In terms of biological role, binds to the 23S rRNA. This chain is Large ribosomal subunit protein uL15, found in Rhodopseudomonas palustris (strain BisA53).